Reading from the N-terminus, the 1403-residue chain is DNA-directed RNA polymerase subunit beta' (1403 aa).

Zn(2+)-binding residues include C70, C72, C85, and C88. Positions 460, 462, and 464 each coordinate Mg(2+). The Zn(2+) site is built by C814, C888, C895, and C898. Positions 1369–1403 are disordered; it reads RRKRRMLEQPESLTADTGTSHYGEDEISESGAATA. The span at 1379–1388 shows a compositional bias: polar residues; the sequence is ESLTADTGTS.

This sequence belongs to the RNA polymerase beta' chain family. In terms of assembly, the RNAP catalytic core consists of 2 alpha, 1 beta, 1 beta' and 1 omega subunit. When a sigma factor is associated with the core the holoenzyme is formed, which can initiate transcription. Mg(2+) is required as a cofactor. Requires Zn(2+) as cofactor.

The enzyme catalyses RNA(n) + a ribonucleoside 5'-triphosphate = RNA(n+1) + diphosphate. Functionally, DNA-dependent RNA polymerase catalyzes the transcription of DNA into RNA using the four ribonucleoside triphosphates as substrates. This Nitrosococcus oceani (strain ATCC 19707 / BCRC 17464 / JCM 30415 / NCIMB 11848 / C-107) protein is DNA-directed RNA polymerase subunit beta'.